Consider the following 949-residue polypeptide: Glycine dehydrogenase (decarboxylating) (949 aa).

Position 704 is an N6-(pyridoxal phosphate)lysine (K704).

Belongs to the GcvP family. In terms of assembly, the glycine cleavage system is composed of four proteins: P, T, L and H. The cofactor is pyridoxal 5'-phosphate.

It carries out the reaction N(6)-[(R)-lipoyl]-L-lysyl-[glycine-cleavage complex H protein] + glycine + H(+) = N(6)-[(R)-S(8)-aminomethyldihydrolipoyl]-L-lysyl-[glycine-cleavage complex H protein] + CO2. Its function is as follows. The glycine cleavage system catalyzes the degradation of glycine. The P protein binds the alpha-amino group of glycine through its pyridoxal phosphate cofactor; CO(2) is released and the remaining methylamine moiety is then transferred to the lipoamide cofactor of the H protein. This chain is Glycine dehydrogenase (decarboxylating), found in Bacteroides fragilis (strain YCH46).